The following is a 283-amino-acid chain: MLRIAVQAKGRLFEETMALLGESDIKISTTKRTLLVQSSNFPIEVLFLRDDDIPQTVATGVADLGIVGENEFMEKEEDAEIIKRLGFSKCRLSLAMPKDIEYPGLSWFNGKKIATSYPVILRNFLKKNGVNAEIHVITGSVEVSPGIGLADAIFDIVSSGSTLVSNRLKEVEVVMKSEALLIGNKNMSDEKKEVLEELLFRMNAVKTAEDKKYVLMNAPKDKLEEIIAVLPGMKSPTIMPLAQEGWCSVHTVLDEKRFWEIIGKLKGLGAEGILVLPIEKMIV.

This sequence belongs to the ATP phosphoribosyltransferase family. Long subfamily. Mg(2+) serves as cofactor.

The protein localises to the cytoplasm. The enzyme catalyses 1-(5-phospho-beta-D-ribosyl)-ATP + diphosphate = 5-phospho-alpha-D-ribose 1-diphosphate + ATP. Its pathway is amino-acid biosynthesis; L-histidine biosynthesis; L-histidine from 5-phospho-alpha-D-ribose 1-diphosphate: step 1/9. Its activity is regulated as follows. Feedback inhibited by histidine. In terms of biological role, catalyzes the condensation of ATP and 5-phosphoribose 1-diphosphate to form N'-(5'-phosphoribosyl)-ATP (PR-ATP). Has a crucial role in the pathway because the rate of histidine biosynthesis seems to be controlled primarily by regulation of HisG enzymatic activity. This chain is ATP phosphoribosyltransferase, found in Bacteroides thetaiotaomicron (strain ATCC 29148 / DSM 2079 / JCM 5827 / CCUG 10774 / NCTC 10582 / VPI-5482 / E50).